The following is a 303-amino-acid chain: Quinolinate synthase (303 aa).

Residues histidine 23 and serine 40 each contribute to the iminosuccinate site. Cysteine 85 lines the [4Fe-4S] cluster pocket. Iminosuccinate-binding positions include 111 to 113 and serine 128; that span reads YVN. Residue cysteine 171 participates in [4Fe-4S] cluster binding. Iminosuccinate contacts are provided by residues 197–199 and threonine 214; that span reads HPE. Cysteine 259 serves as a coordination point for [4Fe-4S] cluster.

This sequence belongs to the quinolinate synthase family. Type 2 subfamily. The cofactor is [4Fe-4S] cluster.

Its subcellular location is the cytoplasm. The enzyme catalyses iminosuccinate + dihydroxyacetone phosphate = quinolinate + phosphate + 2 H2O + H(+). It functions in the pathway cofactor biosynthesis; NAD(+) biosynthesis; quinolinate from iminoaspartate: step 1/1. In terms of biological role, catalyzes the condensation of iminoaspartate with dihydroxyacetone phosphate to form quinolinate. The chain is Quinolinate synthase from Thermodesulfovibrio yellowstonii (strain ATCC 51303 / DSM 11347 / YP87).